The chain runs to 259 residues: 3-oxo-5-alpha-steroid 4-dehydrogenase 1 (259 aa).

Helical transmembrane passes span 12-29 (LLAALAYLQCAVGCAVFA), 86-106 (ILLAMFLVHYGHRCLIYPFLM), 111-131 (PMPLLACTMAIMFCTCNGYLQ), 151-171 (FLIGFGLWLTGMLINIHSDHI), and 209-229 (YALASWSVQGAAFAFFTFCFL).

Belongs to the steroid 5-alpha reductase family. As to expression, liver and prostate (at a low level).

It is found in the microsome membrane. The protein resides in the endoplasmic reticulum membrane. It catalyses the reaction a 3-oxo-5alpha-steroid + NADP(+) = a 3-oxo-Delta(4)-steroid + NADPH + H(+). The catalysed reaction is androst-4-ene-3,17-dione + NADPH + H(+) = 5alpha-androstan-3,17-dione + NADP(+). It carries out the reaction 5alpha-pregnane-3,20-dione + NADP(+) = progesterone + NADPH + H(+). The enzyme catalyses 17beta-hydroxy-5alpha-androstan-3-one + NADP(+) = testosterone + NADPH + H(+). Converts testosterone into 5-alpha-dihydrotestosterone and progesterone or corticosterone into their corresponding 5-alpha-3-oxosteroids. It plays a central role in sexual differentiation and androgen physiology. The chain is 3-oxo-5-alpha-steroid 4-dehydrogenase 1 from Homo sapiens (Human).